The primary structure comprises 226 residues: 2-C-methyl-D-erythritol 4-phosphate cytidylyltransferase (226 aa).

The protein belongs to the IspD/TarI cytidylyltransferase family. IspD subfamily.

It carries out the reaction 2-C-methyl-D-erythritol 4-phosphate + CTP + H(+) = 4-CDP-2-C-methyl-D-erythritol + diphosphate. Its pathway is isoprenoid biosynthesis; isopentenyl diphosphate biosynthesis via DXP pathway; isopentenyl diphosphate from 1-deoxy-D-xylulose 5-phosphate: step 2/6. Its function is as follows. Catalyzes the formation of 4-diphosphocytidyl-2-C-methyl-D-erythritol from CTP and 2-C-methyl-D-erythritol 4-phosphate (MEP). This is 2-C-methyl-D-erythritol 4-phosphate cytidylyltransferase from Bacillus cereus (strain ATCC 10987 / NRS 248).